The primary structure comprises 434 residues: NFATC2-interacting protein (434 aa).

2 disordered regions span residues 1-63 (MGSP…TPAL) and 176-237 (GSED…RAYN). The span at 28 to 59 (GPQPCPKPRGPQPCPKPRGPQPCPKPRGPQPC) shows a compositional bias: pro residues. A compositionally biased stretch (basic residues) spans 228–237 (PVRRKGRAYN). Residues 275 to 351 (PELTVKVRRG…IDCVVLSPPD (77 aa)) enclose the Ubiquitin-like domain.

The protein localises to the nucleus. Its subcellular location is the cytoplasm. In terms of biological role, regulates the magnitude of NFAT-driven transcription of a specific subset of cytokine genes. This chain is NFATC2-interacting protein (nfatc2ip), found in Xenopus tropicalis (Western clawed frog).